We begin with the raw amino-acid sequence, 33 residues long: Photosystem II reaction center protein Psb30 (33 aa).

The helical transmembrane segment at 5 to 25 (LIVQLTSLALITLAGPLIVAL) threads the bilayer.

The protein belongs to the Psb30/Ycf12 family. PSII is composed of 1 copy each of membrane proteins PsbA, PsbB, PsbC, PsbD, PsbE, PsbF, PsbH, PsbI, PsbJ, PsbK, PsbL, PsbM, PsbT, PsbY, PsbZ, Psb30/Ycf12, peripheral proteins of the oxygen-evolving complex and a large number of cofactors. It forms dimeric complexes.

It localises to the plastid. It is found in the chloroplast thylakoid membrane. Its function is as follows. A core subunit of photosystem II (PSII), probably helps stabilize the reaction center. This chain is Photosystem II reaction center protein Psb30, found in Euglena sanguinea.